The sequence spans 401 residues: Homeobox protein engrailed-1 (401 aa).

Disordered stretches follow at residues M1–Q102, G138–G167, S229–P253, and R293–P315. Low complexity predominate over residues D13 to V48. 2 stretches are compositionally biased toward pro residues: residues S49–P64 and P73–Q88. Positions H89–Q102 are enriched in low complexity. 2 stretches are compositionally biased toward gly residues: residues G138 to S147 and S234 to G243. The homeobox DNA-binding region spans D312–T371.

It belongs to the engrailed homeobox family.

It localises to the nucleus. In terms of biological role, required for proper formation of the apical ectodermal ridge and correct dorsal-ventral patterning in the limb. The protein is Homeobox protein engrailed-1 (En1) of Mus musculus (Mouse).